The primary structure comprises 709 residues: Kelch domain-containing protein STK_09390 (709 aa).

The N-terminal stretch at 1 to 22 (MKRNTLLALVLVILIFPTLSTA) is a signal peptide. Kelch repeat units lie at residues 49-94 (KIFL…VCNN), 96-140 (LYVV…SYDY), 141-192 (KIYV…FNGS), 193-240 (ALFV…YYNG), 242-288 (MYLV…VQIG), and 290-340 (KLII…DTNA). 4 Fibronectin type-III domains span residues 315 to 405 (PPPK…VPNP), 406 to 488 (PIIK…ASKA), 489 to 566 (NLTV…IYYI), and 568 to 643 (PASP…NDVR).

The protein is Kelch domain-containing protein STK_09390 of Sulfurisphaera tokodaii (strain DSM 16993 / JCM 10545 / NBRC 100140 / 7) (Sulfolobus tokodaii).